An 833-amino-acid chain; its full sequence is Leucine--tRNA ligase (833 aa).

A 'HIGH' region motif is present at residues 41–52 (PYPSGAGLHVGH). The 'KMSKS' region signature appears at 610–614 (KMSKS). K613 serves as a coordination point for ATP.

Belongs to the class-I aminoacyl-tRNA synthetase family.

The protein resides in the cytoplasm. It carries out the reaction tRNA(Leu) + L-leucine + ATP = L-leucyl-tRNA(Leu) + AMP + diphosphate. The chain is Leucine--tRNA ligase from Streptococcus pyogenes serotype M12 (strain MGAS2096).